The following is an 87-amino-acid chain: UPF0335 protein Avi_3695 (87 aa).

The protein belongs to the UPF0335 family.

In Allorhizobium ampelinum (strain ATCC BAA-846 / DSM 112012 / S4) (Agrobacterium vitis (strain S4)), this protein is UPF0335 protein Avi_3695.